A 246-amino-acid polypeptide reads, in one-letter code: 5-oxoprolinase subunit A (246 aa).

The protein belongs to the LamB/PxpA family. As to quaternary structure, forms a complex composed of PxpA, PxpB and PxpC.

It catalyses the reaction 5-oxo-L-proline + ATP + 2 H2O = L-glutamate + ADP + phosphate + H(+). Functionally, catalyzes the cleavage of 5-oxoproline to form L-glutamate coupled to the hydrolysis of ATP to ADP and inorganic phosphate. The chain is 5-oxoprolinase subunit A from Cupriavidus pinatubonensis (strain JMP 134 / LMG 1197) (Cupriavidus necator (strain JMP 134)).